The following is a 398-amino-acid chain: tRNA-specific 2-thiouridylase MnmA (398 aa).

Residues 20–27 (AMSGGVDS) and Leu-46 contribute to the ATP site. Cys-114 (nucleophile) is an active-site residue. Cys-114 and Cys-210 are oxidised to a cystine. Gly-138 is an ATP binding site. The segment at 160–162 (RDQ) is interaction with tRNA. The Cysteine persulfide intermediate role is filled by Cys-210.

It belongs to the MnmA/TRMU family.

It is found in the cytoplasm. It carries out the reaction S-sulfanyl-L-cysteinyl-[protein] + uridine(34) in tRNA + AH2 + ATP = 2-thiouridine(34) in tRNA + L-cysteinyl-[protein] + A + AMP + diphosphate + H(+). Catalyzes the 2-thiolation of uridine at the wobble position (U34) of tRNA, leading to the formation of s(2)U34. The sequence is that of tRNA-specific 2-thiouridylase MnmA from Brucella canis (strain ATCC 23365 / NCTC 10854 / RM-666).